The chain runs to 139 residues: uncharacterized protein (139 aa).

The N-terminal stretch at 1–32 is a signal peptide; that stretch reads MEFHDDKKNELQKKEEIITEAIDTLFQSSAFG. Positions 44–139 constitute a sHSP domain; it reads SSLKDVQTTI…TLFFPKNKHE (96 aa).

The protein belongs to the small heat shock protein (HSP20) family.

This is an uncharacterized protein from Bacillus subtilis (strain 168).